A 290-amino-acid polypeptide reads, in one-letter code: ATP synthase gamma chain (290 aa).

Belongs to the ATPase gamma chain family. F-type ATPases have 2 components, CF(1) - the catalytic core - and CF(0) - the membrane proton channel. CF(1) has five subunits: alpha(3), beta(3), gamma(1), delta(1), epsilon(1). CF(0) has three main subunits: a, b and c.

The protein localises to the cell inner membrane. Produces ATP from ADP in the presence of a proton gradient across the membrane. The gamma chain is believed to be important in regulating ATPase activity and the flow of protons through the CF(0) complex. This chain is ATP synthase gamma chain, found in Phenylobacterium zucineum (strain HLK1).